The sequence spans 190 residues: DNA dC-&gt;dU-editing enzyme APOBEC-3C (190 aa).

A CMP/dCMP-type deaminase domain is found at 29-138 (DRNETWLCFT…TDYQEGLRSL (110 aa)). Zn(2+) is bound by residues H66, C97, and C100.

Belongs to the cytidine and deoxycytidylate deaminase family. As to quaternary structure, homodimer. Interacts with TRIB3. The cofactor is Zn(2+).

It localises to the nucleus. The protein resides in the cytoplasm. The catalysed reaction is a 2'-deoxycytidine in single-stranded DNA + H2O + H(+) = a 2'-deoxyuridine in single-stranded DNA + NH4(+). Its function is as follows. DNA deaminase (cytidine deaminase) which acts as an inhibitor of retrovirus replication and retrotransposon mobility via deaminase-dependent and -independent mechanisms. May also play a role in the epigenetic regulation of gene expression through the process of active DNA demethylation. The protein is DNA dC-&gt;dU-editing enzyme APOBEC-3C (APOBEC3C) of Gorilla gorilla gorilla (Western lowland gorilla).